The primary structure comprises 420 residues: Probable glucuronosyltransferase Os04g0398600 (420 aa).

The Cytoplasmic segment spans residues 1 to 4 (MGSR). Residues 5–25 (TVGWWLLAAAVVLAAAAADSG) form a helical; Signal-anchor for type II membrane protein membrane-spanning segment. At 26 to 420 (EAERAAEQHS…AGPVGDLKAW (395 aa)) the chain is on the lumenal side. Residues N147 and N408 are each glycosylated (N-linked (GlcNAc...) asparagine).

It belongs to the glycosyltransferase 47 family.

Its subcellular location is the golgi apparatus membrane. Functionally, involved in the synthesis of glucuronoxylan hemicellulose in secondary cell walls. The chain is Probable glucuronosyltransferase Os04g0398600 from Oryza sativa subsp. japonica (Rice).